The following is a 99-amino-acid chain: MDFSKMGELLNQVQEKAKNIELELANREFSAKSGAGLVKVSANGKGEIIDVSIDDSLLEDKESLQILLISAINDVLAMVAQNRSSMANDVLGGFGGMKL.

This sequence belongs to the YbaB/EbfC family. Homodimer.

It is found in the cytoplasm. The protein resides in the nucleoid. Functionally, binds to DNA and alters its conformation. May be involved in regulation of gene expression, nucleoid organization and DNA protection. This chain is Nucleoid-associated protein Cj1642, found in Campylobacter jejuni subsp. jejuni serotype O:2 (strain ATCC 700819 / NCTC 11168).